We begin with the raw amino-acid sequence, 366 residues long: L-tyrosine C(3)-methyltransferase (366 aa).

A compositionally biased stretch (polar residues) spans 1-12 (MTISLENTTVGQ). The disordered stretch occupies residues 1–22 (MTISLENTTVGQNPAGGPPTGK). Residue Glu-223 participates in S-adenosyl-L-methionine binding.

This sequence belongs to the class I-like SAM-binding methyltransferase superfamily. Cation-independent O-methyltransferase family.

It carries out the reaction L-tyrosine + S-adenosyl-L-methionine = 3-methyl-L-tyrosine + S-adenosyl-L-homocysteine + H(+). Its pathway is antibiotic biosynthesis. C-methyltransferase that mediates the methylation of tyrosine into 3-methyl-L-tyrosine (3-Me-Tyr) in biosynthesis of saframycin A, a potent antitumor antibiotic that belongs to the tetrahydroisoquinoline family. Involved in biosynthesis of 3-hydroxy-5-methyl-O-methyltyrosine (3-OH-5-Me-OMe-Tyr), a core structure of saframycin A. The sequence is that of L-tyrosine C(3)-methyltransferase from Streptomyces lavendulae.